A 183-amino-acid polypeptide reads, in one-letter code: A-type ATP synthase subunit E (183 aa).

The protein belongs to the V-ATPase E subunit family. As to quaternary structure, has multiple subunits with at least A(3), B(3), C, D, E, F, H, I and proteolipid K(x).

The protein localises to the cell membrane. Its function is as follows. Component of the A-type ATP synthase that produces ATP from ADP in the presence of a proton gradient across the membrane. This chain is A-type ATP synthase subunit E, found in Methanococcoides burtonii (strain DSM 6242 / NBRC 107633 / OCM 468 / ACE-M).